The primary structure comprises 686 residues: Methionine--tRNA ligase (686 aa).

A 'HIGH' region motif is present at residues Pro-15 to His-25. Residues Cys-147, Cys-150, Cys-160, and Cys-163 each coordinate Zn(2+). The 'KMSKS' region motif lies at Lys-336–Ser-340. An ATP-binding site is contributed by Thr-339. The tRNA-binding domain maps to Asp-584–Asn-686.

This sequence belongs to the class-I aminoacyl-tRNA synthetase family. MetG type 1 subfamily. As to quaternary structure, homodimer. Zn(2+) serves as cofactor.

The protein resides in the cytoplasm. The enzyme catalyses tRNA(Met) + L-methionine + ATP = L-methionyl-tRNA(Met) + AMP + diphosphate. Its function is as follows. Is required not only for elongation of protein synthesis but also for the initiation of all mRNA translation through initiator tRNA(fMet) aminoacylation. This chain is Methionine--tRNA ligase, found in Flavobacterium psychrophilum (strain ATCC 49511 / DSM 21280 / CIP 103535 / JIP02/86).